The sequence spans 302 residues: Deubiquitinase OTUD6B (302 aa).

A compositionally biased stretch (acidic residues) spans 1–10 (MEGSEDEEAE). Disordered stretches follow at residues 1–52 (MEGS…KQLA) and 99–121 (EQQIQHPRISKAQKRREKKAALE). Over residues 106-116 (RISKAQKRREK) the composition is skewed to basic residues. Positions 156-293 (LEIKQIPSDG…GEHYNSVKLL (138 aa)) constitute an OTU domain. The segment at 161-167 (IPSDGHC) is cys-loop. Asp164 is a catalytic residue. The Nucleophile role is filled by Cys167. A variable-loop region spans residues 228-238 (IANTAAWGGQL). Residues 276–286 (YMRHAYGLGEH) are his-loop. His286 is a catalytic residue.

It carries out the reaction Thiol-dependent hydrolysis of ester, thioester, amide, peptide and isopeptide bonds formed by the C-terminal Gly of ubiquitin (a 76-residue protein attached to proteins as an intracellular targeting signal).. Deubiquitinating enzyme that may play a role in the ubiquitin-dependent regulation of different cellular processes. This is Deubiquitinase OTUD6B (OTUD6B) from Gallus gallus (Chicken).